A 3678-amino-acid polypeptide reads, in one-letter code: Dystrophin (3678 aa).

The tract at residues 1-240 (MLWWEEVEDC…YITSLFQVLP (240 aa)) is actin-binding. Calponin-homology (CH) domains lie at 15–119 (DVQK…LHWQ) and 134–240 (TNSE…QVLP). The segment at 63–72 (PKEKGSTRVH) is ANK2- and ANK-3 binding. Positions 313 to 333 (DSTQSPYPSQHLEAPRDKSLD) are disordered. 24 Spectrin repeats span residues 341 to 449 (VNLD…KLHK), 450 to 558 (VLMD…VLQD), 561 to 669 (LKWQ…QISQ), 721 to 830 (ELRK…WLEY), 832 to 936 (TNII…ELQT), 945 to 1047 (RYQE…KLEE), 1050 to 1156 (NKLR…ALKA), 1159 to 1265 (DKTV…TLEE), 1268 to 1369 (ACWH…LLEQ), 1370 to 1465 (SIQS…LFQK), 1470 to 1570 (EQRL…QLEK), 1573 to 1678 (KLSR…LLLE), 1681 to 1780 (KHME…KASI), 1781 to 1876 (PLKE…KALE), 1879 to 1981 (HQWY…TLHE), 1994 to 2103 (DVSY…RFDR), 2106 to 2210 (EKWR…RIEE), 2213 to 2318 (NVLS…ELEV), 2319 to 2416 (HLKD…LRTK), 2468 to 2570 (FNRA…QLNE), 2573 to 2679 (KDST…ALEE), 2682 to 2795 (RLLQ…HLEA), 2801 to 2923 (KRLH…RKID), and 2928 to 3033 (RLQE…QLHE). An interaction with SYNM region spans residues 1417 to 1915 (SDLTSHEISL…PEPRDERKLK (499 aa)). The 34-residue stretch at 3048–3081 (TSVQGPWERAISPNKVPYYINHETQTTCWDHPKM) folds into the WW domain. The interval 3051-3401 (QGPWERAISP…TVLEGDNMET (351 aa)) is interaction with SYNM. The segment at 3301 to 3357 (KHQAKCNICKECPIIGFRYRSLKHFNYDICQSCFFSGRVAKGHKMHYPMVEYCTPTT) adopts a ZZ-type; degenerate zinc-finger fold. 4 residues coordinate Zn(2+): cysteine 3306, cysteine 3309, cysteine 3330, and cysteine 3333. Residues 3459–3511 (DDEHLLIQHYCQSLNQDSPLSQPRSPAQILISLESEERGELERILADLEEENR) form a binds to SNTB1 region. 3 positions are modified to phosphoserine: serine 3476, serine 3483, and serine 3493. Disordered stretches follow at residues 3521–3547 (KQQH…QSPR) and 3596–3678 (EAKV…EDTM). Polar residues-rich tracts occupy residues 3600–3619 (NGTT…SSQP) and 3655–3665 (QLNNSFPSSRG). A phosphoserine mark is found at serine 3605, serine 3606, serine 3610, serine 3616, serine 3617, and serine 3659.

Interacts with SYNM. Interacts with the syntrophins SNTG1 and SNTG2. Interacts with KRT19. Component of the dystrophin-associated glycoprotein complex which is composed of three subcomplexes: a cytoplasmic complex comprised of DMD (or UTRN), DTNA and a number of syntrophins, such as SNTB1, SNTB2, SNTG1 and SNTG2, the transmembrane dystroglycan complex, and the sarcoglycan-sarcospan complex. Interacts with DAG1 (betaDAG1) with DMD; the interaction is inhibited by phosphorylation on the PPXY motif of DAG1. Interacts with SYNM; SNTA1 and SNTB1. Interacts with CMYA5. Directly interacts with ANK2 and ANK3; these interactions do not interfere with betaDAG1-binding and are necessary for proper localization in muscle cells. Identified in a dystroglycan complex that contains at least PRX, DRP2, UTRN, DMD and DAG1. Interacts with DTNB. Interacts with PGM5; the interaction is direct. Interacts with NOS1; localizes NOS1 to sarcolemma in muscle cells. As to expression, detected in quadriceps muscle and in sciatic nerve (at protein level). Expressed in the sarcolemma of the soleus muscle (at protein level). Differentially expressed during skeletal muscle, heart, and brain development. Also expressed in retina.

The protein resides in the cell membrane. The protein localises to the sarcolemma. It localises to the cytoplasm. It is found in the cytoskeleton. Its subcellular location is the postsynaptic cell membrane. Anchors the extracellular matrix to the cytoskeleton via F-actin. Ligand for dystroglycan. Component of the dystrophin-associated glycoprotein complex which accumulates at the neuromuscular junction (NMJ) and at a variety of synapses in the peripheral and central nervous systems and has a structural function in stabilizing the sarcolemma. Also implicated in signaling events and synaptic transmission. The polypeptide is Dystrophin (Dmd) (Mus musculus (Mouse)).